The chain runs to 678 residues: Exoribonuclease 2 (678 aa).

The RNB domain maps to 193-521 (REDLTALPFV…INHRLLKAHI (329 aa)). The 83-residue stretch at 568–650 (ETRFQAEIFD…ENRSLVGKPT (83 aa)) folds into the S1 motif domain. Residues 659–678 (ETQTSAEQPAEGAENNEPQV) are disordered.

Belongs to the RNR ribonuclease family. RNase II subfamily.

It localises to the cytoplasm. The enzyme catalyses Exonucleolytic cleavage in the 3'- to 5'-direction to yield nucleoside 5'-phosphates.. Its function is as follows. Involved in mRNA degradation. Hydrolyzes single-stranded polyribonucleotides processively in the 3' to 5' direction. In Vibrio cholerae serotype O1 (strain ATCC 39315 / El Tor Inaba N16961), this protein is Exoribonuclease 2.